A 657-amino-acid chain; its full sequence is Conserved oligomeric Golgi complex subunit 6 (657 aa).

Low complexity predominate over residues 14-26 (SGAANGLSNGAGA). The tract at residues 14–36 (SGAANGLSNGAGATPAQPNNPLS) is disordered.

Belongs to the COG6 family. Component of the conserved oligomeric Golgi complex which is composed of eight different subunits and is required for normal Golgi morphology and localization.

The protein localises to the golgi apparatus membrane. Required for normal Golgi function. The chain is Conserved oligomeric Golgi complex subunit 6 (Cog6) from Rattus norvegicus (Rat).